A 316-amino-acid polypeptide reads, in one-letter code: MAVQVVQAVQAVHLESDAFLVCLNHALSTEKEEVMGLCIGELNDDTRSDSKFAYTGTEMRTVAEKVDAVRIVHIHSVIILRRSDKRKDRVEISPEQLSAASTEAERLAELTGRPMRVVGWYHSHPHITVWPSHVDVRTQAMYQMMDQGFVGLIFSCFIEDKNTKTGRVLYTCFQSIQAQKSSESLHGPRDFWSSSKHISIEGQKEEERYERIEIPIHIVPHVTIGKVCLESAVELPKILCQEEQDAYRRIHSLTHLDSVTKIHNGSVFTKNLCSQMSAVSGPLLQWLEDRLEQNQQHLRELQQEKEELMQELSSLE.

A2 carries the N-acetylalanine modification. Residues 12–179 (VHLESDAFLV…YTCFQSIQAQ (168 aa)) form the MPN domain. Residues H122, H124, and D135 each coordinate Zn(2+). Residues 122 to 135 (HSHPHITVWPSHVD) carry the JAMM motif motif. S258 bears the Phosphoserine mark.

It belongs to the peptidase M67A family. BRCC36 subfamily. In terms of assembly, component of the ARISC complex, at least composed of UIMC1/RAP80, ABRAXAS1, BRCC3/BRCC36, BABAM2 and BABAM1/NBA1. Component of the BRCA1-A complex, at least composed of BRCA1, BARD1, UIMC1/RAP80, ABRAXAS1, BRCC3/BRCC36, BABAM2 and BABAM1/NBA1. In the BRCA1-A complex, interacts directly with ABRAXAS1 and BABAM2. Component of the BRISC complex, at least composed of ABRAXAS2, BRCC3/BRCC36, BABAM2 and BABAM1/NBA1. Identified in a complex with SHMT2 and the other subunits of the BRISC complex. In the BRISC complex, interacts directly with ABRAXAS2. Identified in a complex with ABRAXAS2 and NUMA1. The BRISC complex interacts with the CSN complex. Component of the BRCA1/BRCA2 containing complex (BRCC), which also contains BRCA1, BRCA2, BARD1, BABAM2 and RAD51. BRCC is a ubiquitin E3 ligase complex that enhances cellular survival following DNA damage. Interacts with BRCA1. Binds polyubiquitin. Interacts with PWWP2B. Interacts with HDAC1; this interaction is enhanced in the presence of PWWP2B. The cofactor is Zn(2+).

It is found in the nucleus. It localises to the cytoplasm. The protein localises to the cytoskeleton. Its subcellular location is the spindle pole. Functionally, metalloprotease that specifically cleaves 'Lys-63'-linked polyubiquitin chains. Does not have activity toward 'Lys-48'-linked polyubiquitin chains. Component of the BRCA1-A complex, a complex that specifically recognizes 'Lys-63'-linked ubiquitinated histones H2A and H2AX at DNA lesions sites, leading to target the BRCA1-BARD1 heterodimer to sites of DNA damage at double-strand breaks (DSBs). In the BRCA1-A complex, it specifically removes 'Lys-63'-linked ubiquitin on histones H2A and H2AX, antagonizing the RNF8-dependent ubiquitination at double-strand breaks (DSBs). Catalytic subunit of the BRISC complex, a multiprotein complex that specifically cleaves 'Lys-63'-linked ubiquitin in various substrates. Mediates the specific 'Lys-63'-specific deubiquitination associated with the COP9 signalosome complex (CSN), via the interaction of the BRISC complex with the CSN complex. The BRISC complex is required for normal mitotic spindle assembly and microtubule attachment to kinetochores via its role in deubiquitinating NUMA1. Plays a role in interferon signaling via its role in the deubiquitination of the interferon receptor IFNAR1; deubiquitination increases IFNAR1 activity by enhancing its stability and cell surface expression. Acts as a regulator of the NLRP3 inflammasome by mediating deubiquitination of NLRP3, leading to NLRP3 inflammasome assembly. Down-regulates the response to bacterial lipopolysaccharide (LPS) via its role in IFNAR1 deubiquitination. Deubiquitinates HDAC1 and PWWP2B leading to their stabilization. This chain is Lys-63-specific deubiquitinase BRCC36 (BRCC3), found in Callithrix jacchus (White-tufted-ear marmoset).